The following is a 234-amino-acid chain: Large ribosomal subunit protein uL1 (234 aa).

The protein belongs to the universal ribosomal protein uL1 family. Part of the 50S ribosomal subunit.

Binds directly to 23S rRNA. The L1 stalk is quite mobile in the ribosome, and is involved in E site tRNA release. In terms of biological role, protein L1 is also a translational repressor protein, it controls the translation of the L11 operon by binding to its mRNA. The sequence is that of Large ribosomal subunit protein uL1 from Maridesulfovibrio salexigens (strain ATCC 14822 / DSM 2638 / NCIMB 8403 / VKM B-1763) (Desulfovibrio salexigens).